Reading from the N-terminus, the 500-residue chain is Phenylalanine--tRNA ligase alpha subunit (500 aa).

L-phenylalanine is bound by residues Thr343, 382-384 (QVD), and Phe423. Glu425 provides a ligand contact to Mg(2+). L-phenylalanine is bound at residue Phe448.

This sequence belongs to the class-II aminoacyl-tRNA synthetase family. Phe-tRNA synthetase alpha subunit type 2 subfamily. In terms of assembly, tetramer of two alpha and two beta subunits. Mg(2+) serves as cofactor.

It is found in the cytoplasm. The enzyme catalyses tRNA(Phe) + L-phenylalanine + ATP = L-phenylalanyl-tRNA(Phe) + AMP + diphosphate + H(+). The chain is Phenylalanine--tRNA ligase alpha subunit from Thermococcus onnurineus (strain NA1).